Here is a 243-residue protein sequence, read N- to C-terminus: Small ribosomal subunit protein uS3 (243 aa).

The 69-residue stretch at 39–107 folds into the KH type-2 domain; it reads IRAYLIKELK…ETHLNIVEVR (69 aa). Residues 214–243 are disordered; the sequence is ASERRGLEGDAQGPASRERGDRPDRRRENA. Residues 229–243 are compositionally biased toward basic and acidic residues; that stretch reads SRERGDRPDRRRENA.

This sequence belongs to the universal ribosomal protein uS3 family. Part of the 30S ribosomal subunit. Forms a tight complex with proteins S10 and S14.

In terms of biological role, binds the lower part of the 30S subunit head. Binds mRNA in the 70S ribosome, positioning it for translation. The protein is Small ribosomal subunit protein uS3 of Agrobacterium fabrum (strain C58 / ATCC 33970) (Agrobacterium tumefaciens (strain C58)).